The following is a 199-amino-acid chain: Recombination protein RecR (199 aa).

The C4-type zinc-finger motif lies at 58 to 73 (CKKCFNLTSEEECDIC). In terms of domain architecture, Toprim spans 81-175 (NIICVVAETK…KVTRIAYGLP (95 aa)).

Belongs to the RecR family.

In terms of biological role, may play a role in DNA repair. It seems to be involved in an RecBC-independent recombinational process of DNA repair. It may act with RecF and RecO. The sequence is that of Recombination protein RecR from Prochlorococcus marinus (strain MIT 9515).